Here is a 43-residue protein sequence, read N- to C-terminus: Protein PsbN (43 aa).

A helical membrane pass occupies residues threonine 5–phenylalanine 27.

Belongs to the PsbN family.

It localises to the plastid. The protein resides in the chloroplast thylakoid membrane. Its function is as follows. May play a role in photosystem I and II biogenesis. The protein is Protein PsbN of Lopidium concinnum (Moss).